Here is a 275-residue protein sequence, read N- to C-terminus: Myoblast determination protein 1 homolog (275 aa).

In terms of domain architecture, bHLH spans 84–135; it reads DRRKAATMRERRRLSKVNDAFETLKRCTSTNPNQRLPKVEILRNAISYIESL. The tract at residues 234–275 is disordered; sequence EGHEESPCSPHEGSVLSDTGTTAPSPTSCPQQQAQETIYQVL. Polar residues predominate over residues 249 to 275; sequence LSDTGTTAPSPTSCPQQQAQETIYQVL.

As to quaternary structure, efficient DNA binding requires dimerization with another bHLH protein. From mid-gastrula to just before somite formation, expressed in cells adjacent to axial mesoderm. Subsequently, during the anterior-to-posterior wave of somite formation and maturation, expressed within particular regions of each somite. Expressed in both muscle and non-muscle cells.

It is found in the nucleus. In terms of biological role, may act as a transcriptional activator that promotes transcription of muscle-specific target genes and plays a role in muscle differentiation. This is Myoblast determination protein 1 homolog (myod1) from Danio rerio (Zebrafish).